The following is a 269-amino-acid chain: MGNWHEWAELLERVRGTKPLVHNITNVVVTNFTANGLLALGASPVMAYAKEEVAEMAKLAGALVLNIGTLNATEVEAMLIAGRAANEAGVPVIFDPVGAGATSYRTETAHRIAEQIQLAVVRGNAAEIANMIGESWMIKGVDAGEGSGDVVALAKRAAAKLGTVVAITGKEDVVTDGQAAYLIHNGHPLLTKVTGAGCLLTSVVGAFAAVEQDAVKAAVAALTYYGVAAEQAAAEAGQRGPGSFQVAFLDALARIGVDDVKREGRVEQR.

Met46 contributes to the substrate binding site. Arg122 and Thr168 together coordinate ATP. Position 195 (Gly195) interacts with substrate.

Belongs to the Thz kinase family. Mg(2+) serves as cofactor.

It catalyses the reaction 5-(2-hydroxyethyl)-4-methylthiazole + ATP = 4-methyl-5-(2-phosphooxyethyl)-thiazole + ADP + H(+). It functions in the pathway cofactor biosynthesis; thiamine diphosphate biosynthesis; 4-methyl-5-(2-phosphoethyl)-thiazole from 5-(2-hydroxyethyl)-4-methylthiazole: step 1/1. Its function is as follows. Catalyzes the phosphorylation of the hydroxyl group of 4-methyl-5-beta-hydroxyethylthiazole (THZ). In Geobacillus thermodenitrificans (strain NG80-2), this protein is Hydroxyethylthiazole kinase.